Here is a 489-residue protein sequence, read N- to C-terminus: WRKY transcription factor 72B (489 aa).

Disordered stretches follow at residues 1–100 (MENK…EMRE), 131–159 (QKET…QEAD), and 234–267 (DENE…RARV). Composition is skewed to basic and acidic residues over residues 32 to 52 (GRKE…KDYM) and 83 to 100 (THKE…EMRE). A coiled-coil region spans residues 84-132 (HKEQDDQLASAKDEMREVMEENQRLRMHLDRMMKEYRNLQNQFHDIVQK). Positions 138–147 (SSSTTVNTST) are enriched in low complexity. A DNA-binding region (WRKY) is located at residues 273-339 (CDAPTMNDGC…YEGTHNHTLP (67 aa)). Disordered regions lie at residues 356 to 381 (LLSG…PTTT) and 427 to 454 (TSTS…YNYN). Low complexity-rich tracts occupy residues 371–381 (TATTTTTPTTT) and 427–438 (TSTSSSSPSSLS).

Belongs to the WRKY group II-b family.

It is found in the nucleus. Its function is as follows. In association with WRKY72A, contributes to basal defense against root-knot nematodes (RKNs) and potato aphids, as well as Mi-1-mediated gene-for-gene resistance to these pests. Both WRKY72A and WRKY72B are not required for gene-for-gene resistance mediated by Pto, another tomato R gene. The polypeptide is WRKY transcription factor 72B (Solanum lycopersicum (Tomato)).